A 352-amino-acid chain; its full sequence is Glycerol-1-phosphate dehydrogenase [NAD(P)+] (352 aa).

NAD(+)-binding positions include glycine 99–aspartate 103 and threonine 121–serine 124. Aspartate 126 contacts substrate. Residue serine 130 coordinates NAD(+). Aspartate 173 is a binding site for substrate. Zn(2+) is bound by residues aspartate 173 and histidine 253. Histidine 257 provides a ligand contact to substrate. Histidine 269 serves as a coordination point for Zn(2+).

The protein belongs to the glycerol-1-phosphate dehydrogenase family. Homodimer. It depends on Zn(2+) as a cofactor.

The protein resides in the cytoplasm. It carries out the reaction sn-glycerol 1-phosphate + NAD(+) = dihydroxyacetone phosphate + NADH + H(+). The catalysed reaction is sn-glycerol 1-phosphate + NADP(+) = dihydroxyacetone phosphate + NADPH + H(+). It participates in membrane lipid metabolism; glycerophospholipid metabolism. With respect to regulation, totally inhibited by EDTA in vitro. In terms of biological role, catalyzes the NAD(P)H-dependent reduction of dihydroxyacetonephosphate (DHAP or glycerone phosphate) to glycerol 1-phosphate (G1P). The G1P thus generated is used as the glycerophosphate backbone of phospholipids in the cellular membranes of Archaea. Is also able to catalyze the reverse reaction, i.e. the NAD(+)-dependent oxidation of G1P but not of G3P. Is not active toward glycerol, dihydroxyacetone, glyceraldehyde phosphate, and glycerol-2-phosphate. The chain is Glycerol-1-phosphate dehydrogenase [NAD(P)+] (egsA) from Aeropyrum pernix (strain ATCC 700893 / DSM 11879 / JCM 9820 / NBRC 100138 / K1).